Here is a 334-residue protein sequence, read N- to C-terminus: N-acetyl-gamma-glutamyl-phosphate reductase (334 aa).

The active site involves Cys-154.

Belongs to the NAGSA dehydrogenase family. Type 1 subfamily.

The protein localises to the cytoplasm. It catalyses the reaction N-acetyl-L-glutamate 5-semialdehyde + phosphate + NADP(+) = N-acetyl-L-glutamyl 5-phosphate + NADPH + H(+). Its pathway is amino-acid biosynthesis; L-arginine biosynthesis; N(2)-acetyl-L-ornithine from L-glutamate: step 3/4. Catalyzes the NADPH-dependent reduction of N-acetyl-5-glutamyl phosphate to yield N-acetyl-L-glutamate 5-semialdehyde. This chain is N-acetyl-gamma-glutamyl-phosphate reductase, found in Photorhabdus laumondii subsp. laumondii (strain DSM 15139 / CIP 105565 / TT01) (Photorhabdus luminescens subsp. laumondii).